The following is a 386-amino-acid chain: Alanine racemase (386 aa).

Lys-48 acts as the Proton acceptor; specific for D-alanine in catalysis. At Lys-48 the chain carries N6-(pyridoxal phosphate)lysine. Residue Arg-147 coordinates substrate. Tyr-279 acts as the Proton acceptor; specific for L-alanine in catalysis. Met-327 contacts substrate.

This sequence belongs to the alanine racemase family. Pyridoxal 5'-phosphate is required as a cofactor.

The catalysed reaction is L-alanine = D-alanine. It participates in amino-acid biosynthesis; D-alanine biosynthesis; D-alanine from L-alanine: step 1/1. Its function is as follows. Catalyzes the interconversion of L-alanine and D-alanine. May also act on other amino acids. The polypeptide is Alanine racemase (alr) (Prochlorococcus marinus (strain SARG / CCMP1375 / SS120)).